The following is a 568-amino-acid chain: Urease subunit alpha (568 aa).

One can recognise a Urease domain in the interval 130–568 (GGIDTHIHFI…LPMAQRYFLF (439 aa)). Ni(2+)-binding residues include His135, His137, and Lys218. Residue Lys218 is modified to N6-carboxylysine. His220 contributes to the substrate binding site. Residues His247 and His273 each coordinate Ni(2+). His321 (proton donor) is an active-site residue. A Ni(2+)-binding site is contributed by Asp361.

The protein belongs to the metallo-dependent hydrolases superfamily. Urease alpha subunit family. Heterotrimer of UreA (gamma), UreB (beta) and UreC (alpha) subunits. Three heterotrimers associate to form the active enzyme. The cofactor is Ni cation. In terms of processing, carboxylation allows a single lysine to coordinate two nickel ions.

The protein localises to the cytoplasm. The catalysed reaction is urea + 2 H2O + H(+) = hydrogencarbonate + 2 NH4(+). It functions in the pathway nitrogen metabolism; urea degradation; CO(2) and NH(3) from urea (urease route): step 1/1. This is Urease subunit alpha from Burkholderia pseudomallei (strain 1106a).